Here is a 345-residue protein sequence, read N- to C-terminus: Transcription factor 19 (345 aa).

The region spanning 31–88 (YRLGHRADLCDVALRPQQEPGLISGIHAELHAEPRGDDWRVSLEDHSSQGTLVNNVRL) is the FHA domain. At Ser78 the chain carries Phosphoserine. The disordered stretch occupies residues 190 to 227 (LTFSPSWGGPKSLPVPAPPGEMGTTPSAPPQRNRRKSV). The PHD-type zinc-finger motif lies at 293-342 (AAPCCCLPQEETVAWVQCDGCDVWFHVACVGCSIQAAREADFRCPGCRAG). Residues Cys296, Cys298, Cys310, Cys313, His318, Cys321, Cys336, and Cys339 each coordinate Zn(2+).

Its subcellular location is the nucleus. Potential transcription factor that may play a role in the regulation of genes involved in cell cycle G1/S transition. May bind to regulatory elements of genes, including the promoter of the transcription factor FOXO1. This chain is Transcription factor 19 (TCF19), found in Homo sapiens (Human).